We begin with the raw amino-acid sequence, 473 residues long: FAD-dependent urate hydroxylase (473 aa).

It belongs to the HpyO family. As to quaternary structure, homodimer. FAD serves as cofactor.

The catalysed reaction is urate + NADH + O2 + H(+) = 5-hydroxyisourate + NAD(+) + H2O. It catalyses the reaction urate + NADPH + O2 + H(+) = 5-hydroxyisourate + NADP(+) + H2O. Its pathway is purine metabolism; urate degradation. Its function is as follows. Catalyzes the hydroxylation of urate to 5-hydroxyisourate (HIU). Is likely to be involved in the urate degradation pathway to allantoin. Is slightly more efficient (about 2.6 times) with NADPH than NADH as the electron donor. In Xanthomonas campestris pv. campestris (strain ATCC 33913 / DSM 3586 / NCPPB 528 / LMG 568 / P 25), this protein is FAD-dependent urate hydroxylase.